The following is a 686-amino-acid chain: tRNA wybutosine-synthesizing protein 4 (686 aa).

The interval 1–22 (MGPRSRQRRTGTVQSTNDSSSL) is disordered. A compositionally biased stretch (polar residues) spans 10–22 (TGTVQSTNDSSSL). S-adenosyl-L-methionine contacts are provided by residues Arg-59, Gly-89, Asp-114, 161-162 (DL), and Glu-188.

It belongs to the methyltransferase superfamily. LCMT family. As to quaternary structure, interacts with RNF144B/IBRDC2.

It catalyses the reaction 7-[(3S)-3-amino-3-carboxypropyl]wyosine(37) in tRNA(Phe) + S-adenosyl-L-methionine = 7-[(3S)-(3-amino-3-methoxycarbonyl)propyl]wyosine(37) in tRNA(Phe) + S-adenosyl-L-homocysteine. The enzyme catalyses 7-[(3S)-(3-amino-3-methoxycarbonyl)propyl]wyosine(37) in tRNA(Phe) + S-adenosyl-L-methionine + CO2 = wybutosine(37) in tRNA(Phe) + S-adenosyl-L-homocysteine + 2 H(+). It participates in tRNA modification; wybutosine-tRNA(Phe) biosynthesis. Functionally, probable S-adenosyl-L-methionine-dependent methyltransferase that acts as a component of the wybutosine biosynthesis pathway. Wybutosine is a hyper modified guanosine with a tricyclic base found at the 3'-position adjacent to the anticodon of eukaryotic phenylalanine tRNA. May methylate the carboxyl group of leucine residues to form alpha-leucine ester residues. The chain is tRNA wybutosine-synthesizing protein 4 (Lcmt2) from Rattus norvegicus (Rat).